We begin with the raw amino-acid sequence, 234 residues long: Leucyl/phenylalanyl-tRNA--protein transferase (234 aa).

Belongs to the L/F-transferase family.

It is found in the cytoplasm. It catalyses the reaction N-terminal L-lysyl-[protein] + L-leucyl-tRNA(Leu) = N-terminal L-leucyl-L-lysyl-[protein] + tRNA(Leu) + H(+). It carries out the reaction N-terminal L-arginyl-[protein] + L-leucyl-tRNA(Leu) = N-terminal L-leucyl-L-arginyl-[protein] + tRNA(Leu) + H(+). The enzyme catalyses L-phenylalanyl-tRNA(Phe) + an N-terminal L-alpha-aminoacyl-[protein] = an N-terminal L-phenylalanyl-L-alpha-aminoacyl-[protein] + tRNA(Phe). Functions in the N-end rule pathway of protein degradation where it conjugates Leu, Phe and, less efficiently, Met from aminoacyl-tRNAs to the N-termini of proteins containing an N-terminal arginine or lysine. In Shigella dysenteriae serotype 1 (strain Sd197), this protein is Leucyl/phenylalanyl-tRNA--protein transferase.